Consider the following 105-residue polypeptide: uncharacterized protein (105 aa).

The next 3 helical transmembrane spans lie at isoleucine 14–tryptophan 34, glutamate 41–leucine 61, and valine 80–isoleucine 100.

The protein localises to the cell membrane. This is an uncharacterized protein from Treponema pallidum (strain Nichols).